We begin with the raw amino-acid sequence, 201 residues long: Small ribosomal subunit protein uS4c (201 aa).

A disordered region spans residues 20–44 (GLTSKRPRAGSDLRNQSRSGKKSQY). The S4 RNA-binding domain occupies 89-152 (MRLDNTLFRL…NSRTLVQNLL (64 aa)).

Belongs to the universal ribosomal protein uS4 family. As to quaternary structure, part of the 30S ribosomal subunit. Contacts protein S5. The interaction surface between S4 and S5 is involved in control of translational fidelity.

It localises to the plastid. It is found in the chloroplast. Its function is as follows. One of the primary rRNA binding proteins, it binds directly to 16S rRNA where it nucleates assembly of the body of the 30S subunit. In terms of biological role, with S5 and S12 plays an important role in translational accuracy. The chain is Small ribosomal subunit protein uS4c (rps4) from Aethionema grandiflorum (Persian stone-cress).